The following is a 346-amino-acid chain: Holliday junction branch migration complex subunit RuvB (346 aa).

The tract at residues 1–182 is large ATPase domain (RuvB-L); it reads MSEPARLISP…FGIPVRLTFY (182 aa). Residues Leu21, Arg22, Gly63, Lys66, Thr67, Thr68, 129-131, Arg172, Tyr182, and Arg219 contribute to the ATP site; that span reads EDY. Thr67 is a Mg(2+) binding site. Residues 183–253 form a small ATPAse domain (RuvB-S) region; that stretch reads TVEELELIVR…IADEALTRLL (71 aa). The interval 256–346 is head domain (RuvB-H); sequence NVGFDQLDKR…AQFRLFQEDD (91 aa). 3 residues coordinate DNA: Arg292, Arg311, and Arg316.

This sequence belongs to the RuvB family. In terms of assembly, homohexamer. Forms an RuvA(8)-RuvB(12)-Holliday junction (HJ) complex. HJ DNA is sandwiched between 2 RuvA tetramers; dsDNA enters through RuvA and exits via RuvB. An RuvB hexamer assembles on each DNA strand where it exits the tetramer. Each RuvB hexamer is contacted by two RuvA subunits (via domain III) on 2 adjacent RuvB subunits; this complex drives branch migration. In the full resolvosome a probable DNA-RuvA(4)-RuvB(12)-RuvC(2) complex forms which resolves the HJ.

The protein resides in the cytoplasm. It catalyses the reaction ATP + H2O = ADP + phosphate + H(+). The RuvA-RuvB-RuvC complex processes Holliday junction (HJ) DNA during genetic recombination and DNA repair, while the RuvA-RuvB complex plays an important role in the rescue of blocked DNA replication forks via replication fork reversal (RFR). RuvA specifically binds to HJ cruciform DNA, conferring on it an open structure. The RuvB hexamer acts as an ATP-dependent pump, pulling dsDNA into and through the RuvAB complex. RuvB forms 2 homohexamers on either side of HJ DNA bound by 1 or 2 RuvA tetramers; 4 subunits per hexamer contact DNA at a time. Coordinated motions by a converter formed by DNA-disengaged RuvB subunits stimulates ATP hydrolysis and nucleotide exchange. Immobilization of the converter enables RuvB to convert the ATP-contained energy into a lever motion, pulling 2 nucleotides of DNA out of the RuvA tetramer per ATP hydrolyzed, thus driving DNA branch migration. The RuvB motors rotate together with the DNA substrate, which together with the progressing nucleotide cycle form the mechanistic basis for DNA recombination by continuous HJ branch migration. Branch migration allows RuvC to scan DNA until it finds its consensus sequence, where it cleaves and resolves cruciform DNA. This Rhizobium etli (strain ATCC 51251 / DSM 11541 / JCM 21823 / NBRC 15573 / CFN 42) protein is Holliday junction branch migration complex subunit RuvB.